A 1153-amino-acid chain; its full sequence is Cytosolic carboxypeptidase 1 (1153 aa).

The disordered stretch occupies residues 357 to 400 (NQPPGVDDVVDESDENEATEVDTENDTENEEDDTGHKTQNDDIE). Positions 364–389 (DVVDESDENEATEVDTENDTENEEDD) are enriched in acidic residues. The Peptidase M14 domain occupies 774-1063 (YPYTYSMLKM…QFCLALLRLR (290 aa)). The Zn(2+) site is built by histidine 845, glutamate 848, and histidine 942. Glutamate 1027 (proton donor/acceptor) is an active-site residue. Over residues 1108 to 1128 (AFLEEVDYSAESNDENDPELE) the composition is skewed to acidic residues. Residues 1108–1153 (AFLEEVDYSAESNDENDPELEPDLRDNHALPDPSSDSELSHQDSLT) form a disordered region. The segment covering 1141-1153 (SSDSELSHQDSLT) has biased composition (polar residues).

The protein belongs to the peptidase M14 family. The cofactor is Zn(2+).

It is found in the cytoplasm. It localises to the cytosol. The protein resides in the nucleus. The protein localises to the mitochondrion. It catalyses the reaction (L-glutamyl)(n+1)-gamma-L-glutamyl-L-glutamyl-[protein] + H2O = (L-glutamyl)(n)-gamma-L-glutamyl-L-glutamyl-[protein] + L-glutamate. The enzyme catalyses C-terminal L-alpha-aminoacyl-L-glutamyl-L-glutamyl-[tubulin] + H2O = C-terminal L-alpha-aminoacyl-L-glutamyl-[tubulin] + L-glutamate. Metallocarboxypeptidase that mediates protein deglutamylation of tubulin and non-tubulin target proteins. Catalyzes the removal of polyglutamate side chains present on the gamma-carboxyl group of glutamate residues within the C-terminal tail of alpha- and beta-tubulin. Specifically cleaves tubulin long-side-chains, while it is not able to remove the branching point glutamate. Also catalyzes the removal of polyglutamate residues from the carboxy-terminus of alpha-tubulin as well as non-tubulin proteins. This chain is Cytosolic carboxypeptidase 1 (agtpbp1), found in Danio rerio (Zebrafish).